A 795-amino-acid chain; its full sequence is Delta-1-pyrroline-5-carboxylate synthase (795 aa).

Residues 1–361 (MLSQVYRYGF…FFSEVKPAGP (361 aa)) form a glutamate 5-kinase region. Residues serine 117, aspartate 223, and asparagine 246 each contribute to the substrate site. Residues 266–267 (SD) and 305–311 (MGGMEAK) contribute to the ATP site. Residues lysine 311, lysine 347, and lysine 550 each carry the N6-succinyllysine modification. Residues 362–795 (TVEQQGEMAR…NLPIPQRNTN (434 aa)) are gamma-glutamyl phosphate reductase.

In the N-terminal section; belongs to the glutamate 5-kinase family. This sequence in the C-terminal section; belongs to the gamma-glutamyl phosphate reductase family. Can form homodimers/multimers.

It localises to the mitochondrion matrix. The enzyme catalyses L-glutamate + ATP = L-glutamyl 5-phosphate + ADP. It carries out the reaction L-glutamate 5-semialdehyde + phosphate + NADP(+) = L-glutamyl 5-phosphate + NADPH + H(+). Its pathway is amino-acid biosynthesis; L-proline biosynthesis; L-glutamate 5-semialdehyde from L-glutamate: step 1/2. It participates in amino-acid biosynthesis; L-proline biosynthesis; L-glutamate 5-semialdehyde from L-glutamate: step 2/2. In terms of biological role, bifunctional enzyme that converts glutamate to glutamate 5-semialdehyde, an intermediate in the biosynthesis of proline, ornithine and arginine. The sequence is that of Delta-1-pyrroline-5-carboxylate synthase (ALDH18A1) from Pongo abelii (Sumatran orangutan).